We begin with the raw amino-acid sequence, 195 residues long: Nucleoid occlusion factor SlmA (195 aa).

Residues 7 to 67 (TNRRAQILQA…GLIEFIEETL (61 aa)) enclose the HTH tetR-type domain. Residues 30-49 (TTAKLAEKVGVSEAALYRHF) constitute a DNA-binding region (H-T-H motif). A coiled-coil region spans residues 109-141 (DALMGEQDRLRARIAKLFERLETQLKQVLRERK).

Belongs to the nucleoid occlusion factor SlmA family. In terms of assembly, homodimer. Interacts with FtsZ.

It is found in the cytoplasm. It localises to the nucleoid. Functionally, required for nucleoid occlusion (NO) phenomenon, which prevents Z-ring formation and cell division over the nucleoid. Acts as a DNA-associated cell division inhibitor that binds simultaneously chromosomal DNA and FtsZ, and disrupts the assembly of FtsZ polymers. SlmA-DNA-binding sequences (SBS) are dispersed on non-Ter regions of the chromosome, preventing FtsZ polymerization at these regions. This chain is Nucleoid occlusion factor SlmA, found in Alteromonas mediterranea (strain DSM 17117 / CIP 110805 / LMG 28347 / Deep ecotype).